A 100-amino-acid polypeptide reads, in one-letter code: Small ribosomal subunit protein uS14c (100 aa).

This sequence belongs to the universal ribosomal protein uS14 family. As to quaternary structure, part of the 30S ribosomal subunit.

It is found in the plastid. The protein localises to the chloroplast. Its function is as follows. Binds 16S rRNA, required for the assembly of 30S particles. This is Small ribosomal subunit protein uS14c from Zygnema circumcarinatum (Green alga).